The sequence spans 252 residues: Trans-aconitate 2-methyltransferase (252 aa).

This sequence belongs to the methyltransferase superfamily. Tam family.

The protein resides in the cytoplasm. The catalysed reaction is trans-aconitate + S-adenosyl-L-methionine = (E)-3-(methoxycarbonyl)pent-2-enedioate + S-adenosyl-L-homocysteine. Its function is as follows. Catalyzes the S-adenosylmethionine monomethyl esterification of trans-aconitate. The polypeptide is Trans-aconitate 2-methyltransferase (Escherichia coli O6:K15:H31 (strain 536 / UPEC)).